Consider the following 349-residue polypeptide: Probable L-asparaginase periplasmic (349 aa).

An N-terminal signal peptide occupies residues 1–21 (MKLTKLALCTLFGLGVSIANA). The Asparaginase/glutaminase domain occupies 25-349 (PNITILATGG…KVIQQYFEDF (325 aa)). Residue Thr-35 is the O-isoaspartyl threonine intermediate of the active site. Substrate is bound by residues Ser-81 and 112–113 (TD). The cysteines at positions 100 and 128 are disulfide-linked.

Belongs to the asparaginase 1 family.

The protein resides in the periplasm. It catalyses the reaction L-asparagine + H2O = L-aspartate + NH4(+). The polypeptide is Probable L-asparaginase periplasmic (ansB) (Haemophilus influenzae (strain ATCC 51907 / DSM 11121 / KW20 / Rd)).